Here is a 275-residue protein sequence, read N- to C-terminus: Large ribosomal subunit protein uL2 (275 aa).

A disordered region spans residues 219-263 (EVRGAAMNPRDHPHGGGEGRAPRGMPTPKTKWGKPARGVKTRHNP). Positions 227-239 (PRDHPHGGGEGRA) are enriched in basic and acidic residues. Residues 249–262 (KWGKPARGVKTRHN) are compositionally biased toward basic residues.

This sequence belongs to the universal ribosomal protein uL2 family. As to quaternary structure, part of the 50S ribosomal subunit. Forms a bridge to the 30S subunit in the 70S ribosome.

In terms of biological role, one of the primary rRNA binding proteins. Required for association of the 30S and 50S subunits to form the 70S ribosome, for tRNA binding and peptide bond formation. It has been suggested to have peptidyltransferase activity; this is somewhat controversial. Makes several contacts with the 16S rRNA in the 70S ribosome. The protein is Large ribosomal subunit protein uL2 of Roseiflexus castenholzii (strain DSM 13941 / HLO8).